A 463-amino-acid chain; its full sequence is Stress-activated protein kinase jnk-1 (463 aa).

Over residues 1–12 (MEERLSTTSSYP) the composition is skewed to polar residues. A disordered region spans residues 1–23 (MEERLSTTSSYPSHPGRSVEEDH). The 294-residue stretch at 119–412 (YQNLRLIGSG…ISVDDALRHP (294 aa)) folds into the Protein kinase domain. Residues 126–131 (GSGAQG) and Lys-148 each bind ATP. Asp-244 acts as the Proton acceptor in catalysis. The residue at position 276 (Thr-276) is a Phosphothreonine. A TXY motif is present at residues 276-278 (TPY). A Phosphotyrosine modification is found at Tyr-278.

The protein belongs to the protein kinase superfamily. CMGC Ser/Thr protein kinase family. MAP kinase subfamily. As to quaternary structure, binds to the scaffolding protein, unc-16. Unc-16 also binds other components of the JNK signaling pathway. Interacts with daf-16. Requires Mg(2+) as cofactor. Post-translationally, dually phosphorylated on Thr-276 and Tyr-278, which activates the enzyme. In terms of tissue distribution, expressed in most neurons, including nerve ring, head ganglions, dorsal and ventral nerve cords and tail ganglions. The Thr-276/Tyr-278 phosphorylated form is present in the nerve ring upon heat exposure.

It is found in the cytoplasm. It localises to the perikaryon. The protein localises to the cell projection. The protein resides in the axon. It carries out the reaction L-seryl-[protein] + ATP = O-phospho-L-seryl-[protein] + ADP + H(+). It catalyses the reaction L-threonyl-[protein] + ATP = O-phospho-L-threonyl-[protein] + ADP + H(+). Its activity is regulated as follows. Activated by threonine and tyrosine phosphorylation by either of the dual specificity kinases, jkk-1 and mek-1. In terms of biological role, serine/threonine-protein kinase which responds to activation by environmental stress by phosphorylating a number of transcription factors such as daf-16, and thus regulates transcriptional activity. By phosphorylating daf-16, plays a role in daf-16 nuclear translocation in intestinal cells in response to environmental stresses such as heat and oxidative stresses. Downstream of jkk-1, may coordinate locomotion via type-D GABAergic motoneurons and regulates synaptic vesicle transport in conjunction with unc-16. Independently of jkk-1, may regulate some mechanosensory responses, such as response to touch. Independently of jkk-1 and downstream of mek-1, plays a role in resistance to heavy metals, such as Cu(2+) or Cd(2+). Regulates germline cell apoptosis in response to heavy metals such as Cu(2+) and arsenite. Required for dopaminergic CEP neuron degeneration in response to Mn(2+). Required for normal sleep bout quantity and arousal thresholds during the transition from the last larval stage to adulthood in well-fed animals. Downstream of jkk-1 but independently of mek-1, positively regulates lifespan. This is Stress-activated protein kinase jnk-1 (jnk-1) from Caenorhabditis elegans.